The primary structure comprises 812 residues: MVSSPPRPTALTDDIHAFGPARATIQGQPLSDSEVEAMDAFFRACNYLAVGMIYLLDNPLLKEPLKPEHIKKRLLGHWGSSPGLAFCYLHLNRIIKKYQQEVIFLAGPGHGAPGVLAPVYLEGSYSEIYPNISEDAAGLKKFFKQFSFPGGIGSHCTPETPGSIHEGGELGYVLSHACGAAFDNPDLIVAAVVGDGEAETAPLATSWHINKFLNPARDGAVLPILNLNGYKINNPTILARIPHQDLENYFRGLGYDPCFVEGSDRPSMHQAMAATLDYCVTRIKEIQRTAREEGLTTLPRWPMIVLRTPKGWTGPAEVNGHKVEGSWRAHQVPLADVHTNPENLQLLENWLRSYRPEELFDHNGTFRPDLKALAPTGNYRMGMNPHANGGLLRKDLKMPNFREYGITFDKPGQIEVENTRPLGVFLRDVMRNNPRNFRIFGPDETTSNKLNAVYEASKKFWIAESFDEDADGGELSPEGRVIEMLSEHTLEGMLEGYLLTGRHGFFSTYEAFVHVIDSMFNQHAKWLSICNELSWRADVSSLNLLITSTVWRQDHNGFTHQDPGFLDIVCNKSAKVTRIYLPPDVNSLLSVADHCLRSKNYVNVIVSDKQLHLQYLTMDQAIIHCTKGVGIWDWASNDQGYEPDLVMASAGDIPTQEALAAIALLRQEFPELKIRYINVVDLFKLQPETEHPHGLSDRDFDSLFTLDRPIIFNFHGYPWLIHRLAYRRHNHRNLHVRGYKEKGNINTPLELAINNEIDRFSLAIDAIDRLPELQVAGAHAKEKFRNMQIAARNYAYEYGVDKPEFSHWTWPF.

It belongs to the XFP family. It depends on thiamine diphosphate as a cofactor.

This Thermosynechococcus vestitus (strain NIES-2133 / IAM M-273 / BP-1) protein is Probable phosphoketolase.